A 421-amino-acid chain; its full sequence is MAYYLNSEAHLDPGPIYVRENGQLHMVSLALDGVKNSLQKPRPFRLFPKGFSVELCMNREDDTAQKEKTDHFIFTYTREGNLRYSAKSLFSLVLGFISDNVDHIDSLIGFPEQIAEKLFSAAEARQKFTEPGAGLRALQKFTEAYGSLVLCSLCLRNRYLVVAEKLEEIKSFRELTRLDLSCCWLGDEHELLEHLTNEALSSVTQLHLKDNCLSDAGIRKMTAPVRVLKRGLENLTLLDLSCNPEITDAGIGYLFSFRKLNCLDISGTGLKDIKAVKDKLRTHIGLVHSKVPLKEFDHSNCKTEGWADQIVLQWERVSVEAVRQRKDPEPRKAAQYFYQKRALTEASRKCPLAETHMNSSGKLQFYREKAPDCHEPLLSQESKKSKKRAFEESEQEQSSPQSAKQKCVCLAVEDWDLLNSY.

5 LRR repeats span residues 149 to 170, 174 to 195, 202 to 222, 234 to 255, and 259 to 280; these read VLCS…EEIK, ELTR…LEHL, SVTQ…RKMT, NLTL…GYLF, and KLNC…KDKL. Residues 374–406 form a disordered region; that stretch reads HEPLLSQESKKSKKRAFEESEQEQSSPQSAKQK. At serine 399 the chain carries Phosphoserine.

It belongs to the LRRC42 family.

This chain is Leucine-rich repeat-containing protein 42 (Lrrc42), found in Rattus norvegicus (Rat).